Reading from the N-terminus, the 96-residue chain is Large ribosomal subunit protein eL43 (96 aa).

The segment at 39-60 (CTFCGKTATKRTCVGIWKCKKC) adopts a C4-type zinc-finger fold.

This sequence belongs to the eukaryotic ribosomal protein eL43 family. As to quaternary structure, component of the large ribosomal subunit. Mature ribosomes consist of a small (40S) and a large (60S) subunit. The 40S subunit contains about 32 different proteins and 1 molecule of RNA (18S). The 60S subunit contains about 42 different proteins and 3 molecules of RNA (28S, 5.8S and 5S).

Its subcellular location is the cytoplasm. In terms of biological role, component of the ribosome, a large ribonucleoprotein complex responsible for the synthesis of proteins in the cell. The small ribosomal subunit (SSU) binds messenger RNAs (mRNAs) and translates the encoded message by selecting cognate aminoacyl-transfer RNA (tRNA) molecules. The large subunit (LSU) contains the ribosomal catalytic site termed the peptidyl transferase center (PTC), which catalyzes the formation of peptide bonds, thereby polymerizing the amino acids delivered by tRNAs into a polypeptide chain. The nascent polypeptides leave the ribosome through a tunnel in the LSU and interact with protein factors that function in enzymatic processing, targeting, and the membrane insertion of nascent chains at the exit of the ribosomal tunnel. This is Large ribosomal subunit protein eL43 from Plasmodium falciparum (isolate 3D7).